Here is a 43-residue protein sequence, read N- to C-terminus: Potassium channel toxin gamma-KTx 4.12 (43 aa).

Disulfide bonds link Cys5-Cys23, Cys11-Cys34, Cys20-Cys39, and Cys24-Cys41.

Expressed by the venom gland.

Its subcellular location is the secreted. In terms of biological role, reversibly blocks Kv11/ERG potassium channels. Is less toxic than ergtoxin (AC Q86QT3). This is Potassium channel toxin gamma-KTx 4.12 from Centruroides sculpturatus (Arizona bark scorpion).